Here is a 60-residue protein sequence, read N- to C-terminus: UPF0434 protein YPA_0693 (60 aa).

It belongs to the UPF0434 family.

The sequence is that of UPF0434 protein YPA_0693 from Yersinia pestis bv. Antiqua (strain Antiqua).